Consider the following 348-residue polypeptide: Phosphate acyltransferase (348 aa).

Belongs to the PlsX family. As to quaternary structure, homodimer. Probably interacts with PlsY.

The protein localises to the cytoplasm. The enzyme catalyses a fatty acyl-[ACP] + phosphate = an acyl phosphate + holo-[ACP]. It functions in the pathway lipid metabolism; phospholipid metabolism. In terms of biological role, catalyzes the reversible formation of acyl-phosphate (acyl-PO(4)) from acyl-[acyl-carrier-protein] (acyl-ACP). This enzyme utilizes acyl-ACP as fatty acyl donor, but not acyl-CoA. This chain is Phosphate acyltransferase, found in Francisella philomiragia subsp. philomiragia (strain ATCC 25017 / CCUG 19701 / FSC 153 / O#319-036).